Reading from the N-terminus, the 1457-residue chain is ABC transporter G family member 36 (1457 aa).

Positions 14 to 43 (RLGGSMRGDSGSMWRRGDDVFSRSSREEDD) are disordered. Basic and acidic residues predominate over residues 28 to 39 (RRGDDVFSRSSR). Residues 164 to 437 (GNALGILPNR…FESTGFKCPD (274 aa)) enclose the ABC transporter 1 domain. Position 197–204 (197–204 (GPPGSGKT)) interacts with ATP. Positions 515 to 728 (ELLKANIDRE…AQNAISVNEL (214 aa)) constitute an ABC transmembrane type-2 1 domain. A run of 7 helical transmembrane segments spans residues 533–553 (FVYM…MTLF), 565–585 (SGGI…FNGF), 621–641 (IPIT…VIGF), 653–673 (LLML…GGAA), 677–697 (IVAN…GGFI), 706–726 (WWIW…ISVN), and 765–785 (IGFG…TLAL). The tract at residues 821–841 (SSGSTRRPMGNGTENDSTIVD) is disordered. In terms of domain architecture, ABC transporter 2 spans 860 to 1112 (LSFDNVRYSV…ELIKYFESIP (253 aa)). 905–912 (GVSGAGKT) contacts ATP. Residues 1185–1399 (TQCMACLWKQ…TLYGLVVSQF (215 aa)) enclose the ABC transmembrane type-2 2 domain. 7 helical membrane-spanning segments follow: residues 1209–1229 (FFFT…LGGK), 1244–1264 (YAAV…VVAV), 1292–1312 (IPYT…MIGF), 1319–1339 (FFWY…YGMM), 1349–1369 (IASI…GFVI), 1380–1400 (WYCW…SQFG), and 1429–1449 (WVAT…GFAI).

The protein belongs to the ABC transporter superfamily. ABCG family. PDR (TC 3.A.1.205) subfamily.

It is found in the membrane. Its function is as follows. May be a general defense protein. In Oryza sativa subsp. indica (Rice), this protein is ABC transporter G family member 36.